The sequence spans 382 residues: Per os infectivity factor 2 (382 aa).

In terms of assembly, forms the PIF complex together with PIF1 and PIF3. The complex also interacts with per os infectivity factor PIF0.

Functionally, per os infectivity factor that mediates the specific binding of occluded virions (ODV) to the host midgut target cells. The protein is Per os infectivity factor 2 of Autographa californica nuclear polyhedrosis virus (AcMNPV).